A 158-amino-acid polypeptide reads, in one-letter code: QDAPTGDAAAGAKVFNKCQTCHMVVAPDGTVLAGKAGKTGNPLYGLDGRAPASYPDFAYGDGIKELGAAGEVWNEADFLQYVADPTKFLKTKTGDTKAKGKMTFKLPNEKEAHDVWAFLNSLAPAPAAAEAAPAADAAAPAAADAAAPAEPAAEGAAT.

Pyrrolidone carboxylic acid is present on Gln-1. Residues Cys-18, Cys-21, His-22, and Met-102 each coordinate heme c. Positions 129–158 (AEAAPAADAAAPAAADAAAPAEPAAEGAAT) are disordered.

The protein belongs to the cytochrome c family. In terms of processing, binds 1 heme c group covalently per subunit.

It localises to the periplasm. In terms of biological role, cytochrome c2 is found mainly in purple, non-sulfur, photosynthetic bacteria where it functions as the electron donor to the oxidized bacteriochlorophyll in the photophosphorylation pathway. However, it may also have a role in the respiratory chain and is found in some non-photosynthetic bacteria. The protein is Cytochrome c2 of Fuscovulum blasticum (Rhodobacter blasticus).